The following is a 402-amino-acid chain: MPYAIDELQEIIGNLRTELVEPIDSGGVNNTRLGRDRVERMSAEVVDSNPYSRLMALQRMNIVKDYERIRDKAVAIVGVGGVGSVTADMLTRCGIGKLILFDYDKVELANMNRLFFTPNQAGLSKVAAAGATLNFINPDVEIEMFNFNITTVDNFDRFLNAISQGGRIAGQPVDLVLSCVDNFEARMAINAACNERNLNWFESGVSENAVSGHIQFIRPGDTACFACAPPLVVAENIDEKTLKKEGVCAASLPTTMGITAGFLVQNVLKYLLNFGEVSDYLGYNALSDFFPKMTLKPNPQCDDSNCLVRQMEFQAKPKPVVVEEKADNEEPLHATNEWGIELVAENAPEINPTSTETPVVGEGLKLAYEAPEKSSETSEETVTTAPPDDASLEDLMAQMKSM.

Positions 81, 102, 125, 148, and 182 each coordinate ATP. Residues Cys-224 and Cys-227 each contribute to the Zn(2+) site. Cys-248 functions as the Glycyl thioester intermediate in the catalytic mechanism. Positions 301 and 306 each coordinate Zn(2+). A disordered region spans residues 369–402 (EAPEKSSETSEETVTTAPPDDASLEDLMAQMKSM).

It belongs to the ubiquitin-activating E1 family. UBA5 subfamily.

E1-like enzyme which activates UFM1. This chain is Ubiquitin-like modifier-activating enzyme 5, found in Drosophila erecta (Fruit fly).